The primary structure comprises 794 residues: Protein SEY1 (794 aa).

Topologically, residues 1–687 are cytoplasmic; the sequence is MMEVIDSVLG…KRSIIKTTTA (687 aa). In terms of domain architecture, GB1/RHD3-type G spans 43–272; the sequence is GLDYHVISVF…ANPYYFKPQY (230 aa). 53–60 contributes to the GTP binding site; sequence GSQSSGKS. Residues 331–352 adopt a coiled-coil conformation; sequence VDHILDDREKLGEVLKNLKQEC. Residues 688-708 traverse the membrane as a helical segment; it reads IPIWMYLLVVALGWNEFVMVL. The Lumenal portion of the chain corresponds to 709-711; sequence RNP. The chain crosses the membrane as a helical span at residues 712–732; the sequence is LLVTLVLLFGVGFIFVNKFGL. Over 733–794 the chain is Cytoplasmic; it reads WGPVLNVAHN…SDNEKIEKSE (62 aa). Positions 770-794 are disordered; the sequence is NSAGKESYEMKDMSDSDNEKIEKSE. Basic and acidic residues predominate over residues 775–794; the sequence is ESYEMKDMSDSDNEKIEKSE.

It belongs to the TRAFAC class dynamin-like GTPase superfamily. GB1/RHD3 GTPase family. RHD3 subfamily.

Its subcellular location is the endoplasmic reticulum membrane. Cooperates with the reticulon proteins and tubule-shaping DP1 family proteins to generate and maintain the structure of the tubular endoplasmic reticulum network. Has GTPase activity, which is required for its function in ER organization. The protein is Protein SEY1 of Zygosaccharomyces rouxii (strain ATCC 2623 / CBS 732 / NBRC 1130 / NCYC 568 / NRRL Y-229).